We begin with the raw amino-acid sequence, 144 residues long: Ribosomal RNA large subunit methyltransferase H (144 aa).

Residues leucine 68, glycine 96, and 112–117 (FSKLTF) contribute to the S-adenosyl-L-methionine site.

It belongs to the RNA methyltransferase RlmH family. Homodimer.

It is found in the cytoplasm. The catalysed reaction is pseudouridine(1915) in 23S rRNA + S-adenosyl-L-methionine = N(3)-methylpseudouridine(1915) in 23S rRNA + S-adenosyl-L-homocysteine + H(+). Functionally, specifically methylates the pseudouridine at position 1915 (m3Psi1915) in 23S rRNA. This Mycoplasmopsis synoviae (strain 53) (Mycoplasma synoviae) protein is Ribosomal RNA large subunit methyltransferase H.